A 271-amino-acid polypeptide reads, in one-letter code: Arginine and glutamate-rich protein 1 (271 aa).

Basic residues-rich tracts occupy residues 1–29 (MGRS…RSRS) and 37–58 (VRKR…RSRS). The necessary and sufficient for RNA binding stretch occupies residues 1 to 72 (MGRSRSRSSS…AAASRRERER (72 aa)). The interval 1–112 (MGRSRSRSSS…EKKAEFERQR (112 aa)) is disordered. Phosphoserine occurs at positions 58 and 60. Thr61 carries the post-translational modification Phosphothreonine. Basic and acidic residues-rich tracts occupy residues 66 to 82 (SRRE…RIDI) and 91 to 112 (SSLD…ERQR). The interval 73–271 (ASSPPDRIDI…KLSFSLKTQD (199 aa)) is necessary and sufficient for transcriptional regulation. Phosphoserine is present on residues Ser74 and Ser75. The short motif at 170 to 174 (LLEEL) is the LXXLL motif 1; degenerate element. The LXXLL motif 2; degenerate motif lies at 199–203 (LERIL). Residues 236–251 (MKLEQERQRQQKEEQK) show a composition bias toward basic and acidic residues. A disordered region spans residues 236–271 (MKLEQERQRQQKEEQKIILGKGKSRPKLSFSLKTQD). Ser264 is subject to Phosphoserine.

It belongs to the ARGLU1 family. In terms of assembly, interacts with MED1; the interaction is direct. Interacts with PUF60, U2AF2 and JMJD6; may interact with other proteins involved in RNA processing and splicing. High expression levels in the neocortex, hippocampus and thalamus but low expression levels in the midbrain and hindbrain (at protein level). Ubiquitously expressed with highest expression levels in the central nervous system and low expression in uterus and pancreas.

The protein localises to the nucleus. The protein resides in the nucleus speckle. Its subcellular location is the chromosome. Functionally, dual function regulator of gene expression; regulator of transcription and modulator of alternative splicing. General coactivator of nuclear receptor-induced gene expression, including genes activated by the glucocorticoid receptor NR3C1. Binds to a subset of pre-mRNAs and to components of the spliceosome machinery to directly modulate basal alternative splicing; involved in simple and complex cassette exon splicing events. Binds its own pre-mRNA and regulates its alternative splicing and degradation; one of the alternatively spliced products is a stable intronic sequence RNA (sisRNA) that binds the protein to regulate its ability to affect splicing. Binding of the sisRNA stimulates phase separation and localization to nuclear speckles, which may contribute to activation of nuclear receptor-induced gene expression. May also indirectly modulate alternative splicing. Regulates transcription of genes involved in heart development, neuronal cell function, protein localization and chromatin localization. Regulates splicing of genes involved in neurogenesis and chromatin organization. Essential for central nervous system development. Required for the estrogen-dependent expression of ESR1 target genes. Can act in cooperation with MED1. The chain is Arginine and glutamate-rich protein 1 (Arglu1) from Mus musculus (Mouse).